A 338-amino-acid chain; its full sequence is MALCVLRNTVRGAAALPRLKASHVVSVYKPRYSSLSNHKYVPRRAVLYVPGNDEKKIRKIPSLKVDCAVLDCEDGVAENKKNEARLRIAKTLEDFDLGTTEKCVRINSVSSGLAEVDLETFLQARVLPSSLMLPKVEGPEEIRWFSDKFSLHLKGRKLEQPMNLIPFVETAMGLLNFKAVCEETLKTGPQVGLCLDAVVFGGEDFRASIGATSNKDTQDILYARQKVVVTAKAFGLQAIDLVYIDFRDEDGLLRQSREAAAMGFTGKQVIHPNQIAVVQEQFTPTPEKIQWAEELIAAFKEHQQLGKGAFTFRGSMIDMPLLKQAQNIVTLATSIKEK.

A mitochondrion-targeting transit peptide spans Met-1–Lys-20. The substrate site is built by Tyr-48, Lys-55, and Lys-59. Lys-55, Lys-59, and Lys-64 each carry N6-acetyllysine. Residues Lys-80 and Lys-90 each carry the N6-acetyllysine; alternate modification. Lys-80 and Lys-90 each carry N6-succinyllysine; alternate. Arg-105 contacts substrate. Positions 169 and 204 each coordinate Mg(2+). Ile-270–His-271 contributes to the substrate binding site. N6-succinyllysine is present on Lys-307. Asp-318 is an active-site residue.

It belongs to the HpcH/HpaI aldolase family. Citrate lyase beta subunit-like subfamily. In terms of assembly, homotrimer. Mg(2+) is required as a cofactor. In terms of tissue distribution, detected in brown fat, brain, liver, kidney, heart, skeletal muscle and ovary (at protein level).

It is found in the mitochondrion. It catalyses the reaction glyoxylate + acetyl-CoA + H2O = (S)-malate + CoA + H(+). The enzyme catalyses propanoyl-CoA + glyoxylate + H2O = 3-methylmalate + CoA + H(+). The catalysed reaction is (3S)-citramalyl-CoA = pyruvate + acetyl-CoA. It carries out the reaction (S)-malyl-CoA + H2O = (S)-malate + CoA + H(+). Its function is as follows. Mitochondrial citramalyl-CoA lyase indirectly involved in the vitamin B12 metabolism. Converts citramalyl-CoA into acetyl-CoA and pyruvate in the C5-dicarboxylate catabolism pathway. The C5-dicarboxylate catabolism pathway is required to detoxify itaconate, a vitamin B12-poisoning metabolite. Also acts as a malate synthase in vitro, converting glyoxylate and acetyl-CoA to malate. Also displays malyl-CoA thioesterase activity. Also acts as a beta-methylmalate synthase in vitro, by mediating conversion of glyoxylate and propionyl-CoA to beta-methylmalate. Also has very weak citramalate synthase activity in vitro. This Mus musculus (Mouse) protein is Citramalyl-CoA lyase, mitochondrial.